The sequence spans 502 residues: ATP synthase subunit alpha (502 aa).

169 to 176 (GDRQTGKT) is an ATP binding site.

Belongs to the ATPase alpha/beta chains family. As to quaternary structure, F-type ATPases have 2 components, CF(1) - the catalytic core - and CF(0) - the membrane proton channel. CF(1) has five subunits: alpha(3), beta(3), gamma(1), delta(1), epsilon(1). CF(0) has three main subunits: a(1), b(2) and c(9-12). The alpha and beta chains form an alternating ring which encloses part of the gamma chain. CF(1) is attached to CF(0) by a central stalk formed by the gamma and epsilon chains, while a peripheral stalk is formed by the delta and b chains.

It is found in the cell inner membrane. It carries out the reaction ATP + H2O + 4 H(+)(in) = ADP + phosphate + 5 H(+)(out). Produces ATP from ADP in the presence of a proton gradient across the membrane. The alpha chain is a regulatory subunit. The polypeptide is ATP synthase subunit alpha (Desulfovibrio desulfuricans (strain ATCC 27774 / DSM 6949 / MB)).